The sequence spans 193 residues: Ribosomal RNA small subunit methyltransferase G (193 aa).

Residues Gly-62, Phe-67, Ile-111–Glu-112, and Arg-125 each bind S-adenosyl-L-methionine.

Belongs to the methyltransferase superfamily. RNA methyltransferase RsmG family.

It is found in the cytoplasm. It carries out the reaction guanosine(527) in 16S rRNA + S-adenosyl-L-methionine = N(7)-methylguanosine(527) in 16S rRNA + S-adenosyl-L-homocysteine. Its function is as follows. Specifically methylates the N7 position of guanine in position 527 of 16S rRNA. This chain is Ribosomal RNA small subunit methyltransferase G, found in Gluconobacter oxydans (strain 621H) (Gluconobacter suboxydans).